The sequence spans 233 residues: Leucyl/phenylalanyl-tRNA--protein transferase (233 aa).

The protein belongs to the L/F-transferase family.

Its subcellular location is the cytoplasm. The enzyme catalyses N-terminal L-lysyl-[protein] + L-leucyl-tRNA(Leu) = N-terminal L-leucyl-L-lysyl-[protein] + tRNA(Leu) + H(+). It carries out the reaction N-terminal L-arginyl-[protein] + L-leucyl-tRNA(Leu) = N-terminal L-leucyl-L-arginyl-[protein] + tRNA(Leu) + H(+). It catalyses the reaction L-phenylalanyl-tRNA(Phe) + an N-terminal L-alpha-aminoacyl-[protein] = an N-terminal L-phenylalanyl-L-alpha-aminoacyl-[protein] + tRNA(Phe). Functions in the N-end rule pathway of protein degradation where it conjugates Leu, Phe and, less efficiently, Met from aminoacyl-tRNAs to the N-termini of proteins containing an N-terminal arginine or lysine. This chain is Leucyl/phenylalanyl-tRNA--protein transferase, found in Shewanella denitrificans (strain OS217 / ATCC BAA-1090 / DSM 15013).